Here is a 403-residue protein sequence, read N- to C-terminus: S-adenosylmethionine synthase (403 aa).

Residue His15 participates in ATP binding. Mg(2+) is bound at residue Asp17. Glu43 lines the K(+) pocket. Positions 56 and 99 each coordinate L-methionine. The flexible loop stretch occupies residues 99–109; it reads QSPDINQGVDR. ATP is bound by residues 166–168, 232–233, Asp241, 247–248, Ala264, and Lys268; these read DAK, KF, and RK. An L-methionine-binding site is contributed by Asp241. An L-methionine-binding site is contributed by Lys272.

Belongs to the AdoMet synthase family. Homotetramer; dimer of dimers. Requires Mg(2+) as cofactor. The cofactor is K(+).

It localises to the cytoplasm. The catalysed reaction is L-methionine + ATP + H2O = S-adenosyl-L-methionine + phosphate + diphosphate. It participates in amino-acid biosynthesis; S-adenosyl-L-methionine biosynthesis; S-adenosyl-L-methionine from L-methionine: step 1/1. Its function is as follows. Catalyzes the formation of S-adenosylmethionine (AdoMet) from methionine and ATP. The overall synthetic reaction is composed of two sequential steps, AdoMet formation and the subsequent tripolyphosphate hydrolysis which occurs prior to release of AdoMet from the enzyme. In Xylella fastidiosa (strain M12), this protein is S-adenosylmethionine synthase.